A 143-amino-acid chain; its full sequence is MREFRRVRRVRFAACALVAAATGITLAAGPASADIPIGQKMTGKMTYYTDKGYGACGTPIDASSQDLVAIPAAWWTTPNPNNDPLCRGVSVEVSYNGRTIRVPVRDKCPSCDRTHIDLSQAAFAKLAPLDRGVVNGITWKFVR.

The signal sequence occupies residues 1 to 33 (MREFRRVRRVRFAACALVAAATGITLAAGPASA).

In terms of assembly, monomer.

It is found in the secreted. Its function is as follows. Stress protein produced under hyperthermal stress conditions. Serves as a glutamine and lysine donor substrate for transglutaminase. Inhibits the cysteine proteases papain and bromelain as well as the bovine serine protease trypsin. Has hardly any or no effect on subtilisin, bovine chymotrypsin, proteinase K from T.album, transglutaminase-activating metalloproteinase (TAMEP) from S.mobaraensis, dispase from B.polymyxa, thermolysin from B.thermoproteolyticus or collagenase from C.histolyticum. This chain is Papain inhibitor (pi), found in Streptomyces mobaraensis (Streptoverticillium mobaraense).